A 201-amino-acid polypeptide reads, in one-letter code: Probable cytokinin riboside 5'-monophosphate phosphoribohydrolase LOG6 (201 aa).

Residues Glu-89, 107–108 (RK), 124–130 (GYGTLEE), and Thr-136 each bind substrate.

Belongs to the LOG family.

The catalysed reaction is N(6)-(dimethylallyl)adenosine 5'-phosphate + H2O = N(6)-dimethylallyladenine + D-ribose 5-phosphate. It carries out the reaction 9-ribosyl-trans-zeatin 5'-phosphate + H2O = trans-zeatin + D-ribose 5-phosphate. Functionally, cytokinin-activating enzyme working in the direct activation pathway. Phosphoribohydrolase that converts inactive cytokinin nucleotides to the biologically active free-base forms. The chain is Probable cytokinin riboside 5'-monophosphate phosphoribohydrolase LOG6 (LOG6) from Arabidopsis thaliana (Mouse-ear cress).